A 441-amino-acid chain; its full sequence is N-succinylarginine dihydrolase (441 aa).

Residues 19–28 (AGLSFGNEAS), asparagine 110, and 137–138 (HR) contribute to the substrate site. Residue glutamate 174 is part of the active site. Substrate is bound at residue arginine 212. Histidine 248 is a catalytic residue. Substrate contacts are provided by aspartate 250 and asparagine 359. The active-site Nucleophile is the cysteine 365.

It belongs to the succinylarginine dihydrolase family. As to quaternary structure, homodimer.

The catalysed reaction is N(2)-succinyl-L-arginine + 2 H2O + 2 H(+) = N(2)-succinyl-L-ornithine + 2 NH4(+) + CO2. Its pathway is amino-acid degradation; L-arginine degradation via AST pathway; L-glutamate and succinate from L-arginine: step 2/5. Its function is as follows. Catalyzes the hydrolysis of N(2)-succinylarginine into N(2)-succinylornithine, ammonia and CO(2). The sequence is that of N-succinylarginine dihydrolase from Erwinia tasmaniensis (strain DSM 17950 / CFBP 7177 / CIP 109463 / NCPPB 4357 / Et1/99).